Consider the following 307-residue polypeptide: Pyridoxal 5'-phosphate synthase subunit PdxS (307 aa).

A compositionally biased stretch (basic residues) spans 1–10 (MRGQPRPKLR). A disordered region spans residues 1–20 (MRGQPRPKLRRMTEQQTGTP). A D-ribose 5-phosphate-binding site is contributed by Asp-37. Residue Lys-94 is the Schiff-base intermediate with D-ribose 5-phosphate of the active site. Position 166 (Gly-166) interacts with D-ribose 5-phosphate. Arg-178 provides a ligand contact to D-glyceraldehyde 3-phosphate. Residues Gly-227 and 248 to 249 (GS) contribute to the D-ribose 5-phosphate site.

The protein belongs to the PdxS/SNZ family. In terms of assembly, in the presence of PdxT, forms a dodecamer of heterodimers.

It carries out the reaction aldehydo-D-ribose 5-phosphate + D-glyceraldehyde 3-phosphate + L-glutamine = pyridoxal 5'-phosphate + L-glutamate + phosphate + 3 H2O + H(+). It functions in the pathway cofactor biosynthesis; pyridoxal 5'-phosphate biosynthesis. Functionally, catalyzes the formation of pyridoxal 5'-phosphate from ribose 5-phosphate (RBP), glyceraldehyde 3-phosphate (G3P) and ammonia. The ammonia is provided by the PdxT subunit. Can also use ribulose 5-phosphate and dihydroxyacetone phosphate as substrates, resulting from enzyme-catalyzed isomerization of RBP and G3P, respectively. This chain is Pyridoxal 5'-phosphate synthase subunit PdxS, found in Deinococcus radiodurans (strain ATCC 13939 / DSM 20539 / JCM 16871 / CCUG 27074 / LMG 4051 / NBRC 15346 / NCIMB 9279 / VKM B-1422 / R1).